A 527-amino-acid chain; its full sequence is Arginine--tRNA ligase (527 aa).

A 'HIGH' region motif is present at residues 108–118 (ANPTGPLHIGH).

Belongs to the class-I aminoacyl-tRNA synthetase family. In terms of assembly, monomer.

Its subcellular location is the cytoplasm. It carries out the reaction tRNA(Arg) + L-arginine + ATP = L-arginyl-tRNA(Arg) + AMP + diphosphate. The chain is Arginine--tRNA ligase from Sulfurimonas denitrificans (strain ATCC 33889 / DSM 1251) (Thiomicrospira denitrificans (strain ATCC 33889 / DSM 1251)).